The following is a 643-amino-acid chain: Phosphomethylpyrimidine synthase (643 aa).

Substrate is bound by residues N248, M277, Y306, H342, 362 to 364 (SRG), 403 to 406 (DGLR), and E442. Residue H446 coordinates Zn(2+). Y469 provides a ligand contact to substrate. H510 contacts Zn(2+). [4Fe-4S] cluster-binding residues include C590, C593, and C598.

The protein belongs to the ThiC family. In terms of assembly, homodimer. Requires [4Fe-4S] cluster as cofactor.

The enzyme catalyses 5-amino-1-(5-phospho-beta-D-ribosyl)imidazole + S-adenosyl-L-methionine = 4-amino-2-methyl-5-(phosphooxymethyl)pyrimidine + CO + 5'-deoxyadenosine + formate + L-methionine + 3 H(+). Its pathway is cofactor biosynthesis; thiamine diphosphate biosynthesis. Catalyzes the synthesis of the hydroxymethylpyrimidine phosphate (HMP-P) moiety of thiamine from aminoimidazole ribotide (AIR) in a radical S-adenosyl-L-methionine (SAM)-dependent reaction. This is Phosphomethylpyrimidine synthase from Burkholderia cenocepacia (strain HI2424).